Here is a 209-residue protein sequence, read N- to C-terminus: CAAX box protein 1 (209 aa).

The tract at residues 182-209 (TAGRPPRDLSPSARPISSPPPETSCVLA) is disordered. The residue at position 206 (Cys206) is a Cysteine methyl ester. Residue Cys206 is the site of S-farnesyl cysteine attachment. A propeptide spans 207–209 (VLA) (removed in mature form).

As to expression, ubiquitous.

Its subcellular location is the cell membrane. In Homo sapiens (Human), this protein is CAAX box protein 1.